Reading from the N-terminus, the 381-residue chain is GDP-mannose-dependent alpha-(1-6)-phosphatidylinositol dimannoside mannosyltransferase (381 aa).

Residues Gly-16, Arg-207, 211–212 (EK), 283–287 (ETFGL), and Glu-291 each bind substrate.

The protein belongs to the glycosyltransferase group 1 family. Glycosyltransferase 4 subfamily.

It functions in the pathway phospholipid metabolism; phosphatidylinositol metabolism. Functionally, catalyzes the addition of a mannose residue from GDP-D-mannose to the position 6 of the alpha-1,6-linked mannose residue of the triacyl phosphatidylinositol dimannoside (Ac3PIM2) to generate triacyl phosphatidylinositol trimannoside (Ac3PIM3). This chain is GDP-mannose-dependent alpha-(1-6)-phosphatidylinositol dimannoside mannosyltransferase (pimC), found in Mycobacterium tuberculosis (strain ATCC 25177 / H37Ra).